A 423-amino-acid chain; its full sequence is MSKLVAPHGGKGLVCCLLEGKALEDEKKKAAGLKQIEISSRAKGDLIMMGIGGFSPLNGFMNKADWKSVCEKMTLTDGTFWPVPVTLDVSAAEAKSIKAGEEVALVRKGEVMATMKVEEIYEMTEADKKMECELVFKGEGPDSEKFWEVAPEDHPGVKMVLAQKEYNIAGPVKVLSQGEFPEKFPGVYMTPAQLRAKMDERGWQKVAALQLRNPMHRSHEYLAKIGVEVCDGVVIHSLVGSLKPGDIPAEVRVKCIDTLVDKYFVKDFVIQAGYPLDMRYAGPREALLHATFRQNYGINNLLVGRDHAGVGDFYGMFEAQEIFRKMPTPADSGKRLLCEPLNIDWTFYCKKCDGMASMRTCPHGKEDRVILSGTKLRKMLSEGADVPDHFGRDEVLAILREYYSGLTEKVEVKMQRAASGSTM.

Belongs to the sulfate adenylyltransferase family.

The enzyme catalyses sulfate + ATP + H(+) = adenosine 5'-phosphosulfate + diphosphate. The protein operates within sulfur metabolism; hydrogen sulfide biosynthesis; sulfite from sulfate: step 1/3. In Desulfovibrio desulfuricans (strain ATCC 27774 / DSM 6949 / MB), this protein is Sulfate adenylyltransferase.